Here is a 487-residue protein sequence, read N- to C-terminus: Ribulose bisphosphate carboxylase large chain (487 aa).

Residues Asn-127 and Thr-177 each contribute to the substrate site. Lys-179 acts as the Proton acceptor in catalysis. Lys-181 is a binding site for substrate. Residues Lys-205, Asp-207, and Glu-208 each coordinate Mg(2+). Position 205 is an N6-carboxylysine (Lys-205). Catalysis depends on His-297, which acts as the Proton acceptor. Positions 298, 330, and 382 each coordinate substrate.

Belongs to the RuBisCO large chain family. Type I subfamily. Heterohexadecamer of 8 large chains and 8 small chains. It depends on Mg(2+) as a cofactor.

It carries out the reaction 2 (2R)-3-phosphoglycerate + 2 H(+) = D-ribulose 1,5-bisphosphate + CO2 + H2O. It catalyses the reaction D-ribulose 1,5-bisphosphate + O2 = 2-phosphoglycolate + (2R)-3-phosphoglycerate + 2 H(+). In terms of biological role, ruBisCO catalyzes two reactions: the carboxylation of D-ribulose 1,5-bisphosphate, the primary event in carbon dioxide fixation, as well as the oxidative fragmentation of the pentose substrate. Both reactions occur simultaneously and in competition at the same active site. The polypeptide is Ribulose bisphosphate carboxylase large chain (Paracoccus denitrificans (strain Pd 1222)).